Consider the following 104-residue polypeptide: L-rhamnose mutarotase (104 aa).

Tyrosine 18 contributes to the substrate binding site. Histidine 22 (proton donor) is an active-site residue. Substrate is bound by residues tyrosine 41 and 76–77; that span reads WW.

The protein belongs to the rhamnose mutarotase family. As to quaternary structure, homodimer.

The protein localises to the cytoplasm. The enzyme catalyses alpha-L-rhamnose = beta-L-rhamnose. It functions in the pathway carbohydrate metabolism; L-rhamnose metabolism. Functionally, involved in the anomeric conversion of L-rhamnose. This is L-rhamnose mutarotase from Sinorhizobium fredii (strain NBRC 101917 / NGR234).